The following is an 88-amino-acid chain: UPF0297 protein EAT1b_2723 (88 aa).

The protein belongs to the UPF0297 family.

The protein is UPF0297 protein EAT1b_2723 of Exiguobacterium sp. (strain ATCC BAA-1283 / AT1b).